Here is a 151-residue protein sequence, read N- to C-terminus: UPF0735 ACT domain-containing protein SSP1116 (151 aa).

Residues 74-149 (TLILYVNDIV…HVSKVELISM (76 aa)) form the ACT domain.

This sequence belongs to the UPF0735 family.

The sequence is that of UPF0735 ACT domain-containing protein SSP1116 from Staphylococcus saprophyticus subsp. saprophyticus (strain ATCC 15305 / DSM 20229 / NCIMB 8711 / NCTC 7292 / S-41).